The following is a 330-amino-acid chain: Polygalacturonase inhibitor 1 (330 aa).

The first 21 residues, Met1–Ser21, serve as a signal peptide directing secretion. Cystine bridges form between Cys25–Cys55 and Cys56–Cys63. LRR repeat units lie at residues Asn69 to Leu93, Pro94 to Lys117, Leu118 to Leu142, Lys143 to Leu166, Pro167 to Ser189, Pro191 to Ile215, Phe217 to Ser237, Asn238 to Ile260, Pro261 to Ala285, and Leu287 to Thr309. Residues Asn106 and Asn130 are each glycosylated (N-linked (GlcNAc...) asparagine). A glycan (N-linked (GlcNAc...) asparagine) is linked at Asn238. Residue Asn291 is glycosylated (N-linked (GlcNAc...) asparagine). Intrachain disulfides connect Cys298–Cys320 and Cys322–Cys329.

Belongs to the polygalacturonase-inhibiting protein family.

It is found in the secreted. The protein localises to the cell wall. It localises to the membrane. Its function is as follows. Inhibitor of fungal polygalacturonase. It is an important factor for plant resistance to phytopathogenic fungi. The protein is Polygalacturonase inhibitor 1 (PGIP1) of Arabidopsis thaliana (Mouse-ear cress).